Here is a 243-residue protein sequence, read N- to C-terminus: MHKSNNKIRQRIIIKLSGAGLTKENSQPFSNDFFETIINQLKVLKESYQVGIVIGGGNIIRGNNCQEFNIAEYHGHQLGIIATVVNGYFLKAKLDAHNLKSALLSAISCPSLAVQILSQQTIDKAFEENDFVIFSGGTGNPYFSTDTALALRAVQTKAVAILIGKNGVDGVYTADPKKDKNATFLPTLNYDHAIKNDLKIMDITAFTMCKENNLKIIIFNINAENALLDALNKKGRFTIIENN.

15–18 is an ATP binding site; sequence KLSG. Glycine 56 provides a ligand contact to UMP. Positions 57 and 61 each coordinate ATP. Position 138–145 (138–145) interacts with UMP; that stretch reads TGNPYFST. 3 residues coordinate ATP: asparagine 166, tyrosine 172, and aspartate 175.

The protein belongs to the UMP kinase family. Homohexamer.

It localises to the cytoplasm. The catalysed reaction is UMP + ATP = UDP + ADP. Its pathway is pyrimidine metabolism; CTP biosynthesis via de novo pathway; UDP from UMP (UMPK route): step 1/1. Its activity is regulated as follows. Inhibited by UTP. Functionally, catalyzes the reversible phosphorylation of UMP to UDP. The protein is Uridylate kinase of Mycoplasma genitalium (strain ATCC 33530 / DSM 19775 / NCTC 10195 / G37) (Mycoplasmoides genitalium).